The primary structure comprises 265 residues: Zinc import ATP-binding protein ZnuC (265 aa).

Residues 6 to 221 (IRLEQVAVTL…PAFVELFGKN (216 aa)) form the ABC transporter domain. Residue 38–45 (GPNGAGKT) participates in ATP binding. The interval 245-265 (DAPATSSHTHTHVHGDHCKHG) is disordered.

The protein belongs to the ABC transporter superfamily. Zinc importer (TC 3.A.1.15.5) family. As to quaternary structure, the complex is composed of two ATP-binding proteins (ZnuC), two transmembrane proteins (ZnuB) and a solute-binding protein (ZnuA).

It localises to the cell inner membrane. The catalysed reaction is Zn(2+)(out) + ATP(in) + H2O(in) = Zn(2+)(in) + ADP(in) + phosphate(in) + H(+)(in). In terms of biological role, part of the ABC transporter complex ZnuABC involved in zinc import. Responsible for energy coupling to the transport system. The sequence is that of Zinc import ATP-binding protein ZnuC from Pseudomonas savastanoi pv. phaseolicola (strain 1448A / Race 6) (Pseudomonas syringae pv. phaseolicola (strain 1448A / Race 6)).